A 277-amino-acid polypeptide reads, in one-letter code: uncharacterized protein (277 aa).

It belongs to the BtpA family.

The protein localises to the mitochondrion. This is an uncharacterized protein from Caenorhabditis elegans.